A 98-amino-acid polypeptide reads, in one-letter code: Integration host factor subunit alpha (98 aa).

A disordered region spans residues 52 to 71 (FDLRDKNQRPGRNPKTGEDI).

This sequence belongs to the bacterial histone-like protein family. In terms of assembly, heterodimer of an alpha and a beta chain.

This protein is one of the two subunits of integration host factor, a specific DNA-binding protein that functions in genetic recombination as well as in transcriptional and translational control. The chain is Integration host factor subunit alpha from Photorhabdus laumondii subsp. laumondii (strain DSM 15139 / CIP 105565 / TT01) (Photorhabdus luminescens subsp. laumondii).